The following is a 142-amino-acid chain: Hemoglobin larval subunit alpha (142 aa).

The Globin domain maps to 2-142; the sequence is VLSAEEKALV…VSAVLTSKYR (141 aa). Histidine 59 is a binding site for O2. Histidine 88 lines the heme b pocket.

The protein belongs to the globin family. In terms of assembly, heterotetramer of two alpha chains and two beta chains. As to expression, red blood cells.

Functionally, involved in oxygen transport from the lung to the various peripheral tissues. The polypeptide is Hemoglobin larval subunit alpha (Pleurodeles waltl (Iberian ribbed newt)).